The primary structure comprises 78 residues: Exodeoxyribonuclease 7 small subunit (78 aa).

It belongs to the XseB family. As to quaternary structure, heterooligomer composed of large and small subunits.

The protein localises to the cytoplasm. The enzyme catalyses Exonucleolytic cleavage in either 5'- to 3'- or 3'- to 5'-direction to yield nucleoside 5'-phosphates.. Its function is as follows. Bidirectionally degrades single-stranded DNA into large acid-insoluble oligonucleotides, which are then degraded further into small acid-soluble oligonucleotides. This is Exodeoxyribonuclease 7 small subunit from Actinobacillus succinogenes (strain ATCC 55618 / DSM 22257 / CCUG 43843 / 130Z).